The primary structure comprises 300 residues: MSRTYKASGINLKTQVLGESDKIVTILTPEFGLIRAVAPGARKHNSSLGGRSGMFVVNELLIAKGRSLDKITQAQTLKTYPGLAKDLGKLAASQYLAEIVLSQALSEQPQEELYELFNEHLHRLEALSNANASGVLAHLAHGVFHLLALAGVTPQVQICCLSGRSLKPDFTEPNWQIGFSVPTGGTICLEAWKRLRTEGKGEINNQYPIPHIPLPMPHAQTVVVHRQEIPLISSRLGAMELALLQHLSQPEIMQIDGARDHNWLSVEQILRQYAQYQLGRPIRSATLIDSYFAANHDATI.

It belongs to the RecO family.

In terms of biological role, involved in DNA repair and RecF pathway recombination. This chain is DNA repair protein RecO, found in Nostoc punctiforme (strain ATCC 29133 / PCC 73102).